We begin with the raw amino-acid sequence, 351 residues long: MALVSPGVSSRRSTNHCIFGAIEPFDSCVTYRSPCSSDASVDDGWFICDYHLKLRFKMSKMVLPIYDEDDNQYKRTIARHLVGHKERGVKRILVPTRANYMTVFNLPGMMLAEQLIFHLIYDNRLEVNRICASLKNNENFIDNTYSVVESVYSATRNILSLTDPQAYCSRVANDDVRFFDANVVDNNYQAGNGDTVFNNMPGFLRNLIRRAVAPETLQIDSEDLRLRNCNTCVINNTGLVATVTNTELYNPVRSSDIIKTRPNRLQIRNVLKFEGDTRALERTLGRYEEYPMYVPLFLGYQLVNLQNDILRANNFLPAPFGVPQAVNNLEAQAPAAPAPAAPAPAPAAPVV.

This sequence belongs to the baculoviridae p39 family.

Its subcellular location is the virion. This chain is Major capsid protein (P39), found in Orgyia pseudotsugata (Douglas-fir tussock moth).